Here is a 110-residue protein sequence, read N- to C-terminus: UPF0060 membrane protein Bcep1808_1236 (110 aa).

A run of 3 helical transmembrane segments spans residues Ala-9–Leu-29, Pro-34–Leu-54, and Tyr-66–Leu-86.

Belongs to the UPF0060 family.

Its subcellular location is the cell inner membrane. In Burkholderia vietnamiensis (strain G4 / LMG 22486) (Burkholderia cepacia (strain R1808)), this protein is UPF0060 membrane protein Bcep1808_1236.